We begin with the raw amino-acid sequence, 517 residues long: Bifunctional purine biosynthesis protein PurH (517 aa).

The 151-residue stretch at 1-151 (MTQERKIKRA…KNFAHVAVLC (151 aa)) folds into the MGS-like domain.

Belongs to the PurH family.

It carries out the reaction (6R)-10-formyltetrahydrofolate + 5-amino-1-(5-phospho-beta-D-ribosyl)imidazole-4-carboxamide = 5-formamido-1-(5-phospho-D-ribosyl)imidazole-4-carboxamide + (6S)-5,6,7,8-tetrahydrofolate. The enzyme catalyses IMP + H2O = 5-formamido-1-(5-phospho-D-ribosyl)imidazole-4-carboxamide. It functions in the pathway purine metabolism; IMP biosynthesis via de novo pathway; 5-formamido-1-(5-phospho-D-ribosyl)imidazole-4-carboxamide from 5-amino-1-(5-phospho-D-ribosyl)imidazole-4-carboxamide (10-formyl THF route): step 1/1. It participates in purine metabolism; IMP biosynthesis via de novo pathway; IMP from 5-formamido-1-(5-phospho-D-ribosyl)imidazole-4-carboxamide: step 1/1. This chain is Bifunctional purine biosynthesis protein PurH, found in Elusimicrobium minutum (strain Pei191).